The sequence spans 426 residues: Large envelope protein (426 aa).

A lipid anchor (N-myristoyl glycine; by host) is attached at glycine 2. Residues glycine 2–leucine 143 form a pre-S1 region. The pre-S stretch occupies residues glycine 2–serine 202. Residues glycine 2–serine 209 are Virion surface; in external conformation-facing. Residues glycine 2 to arginine 281 are Intravirion; in internal conformation-facing. Residue asparagine 3 is glycosylated (N-linked (GlcNAc...) asparagine). The segment at isoleucine 107–histidine 142 is disordered. Residues threonine 144–serine 202 form a pre-S2 region. Residues leucine 210–isoleucine 230 traverse the membrane as a helical segment. The Intravirion; in external conformation segment spans residues alanine 231 to arginine 281. A helical transmembrane segment spans residues phenylalanine 282 to tryptophan 302. The Virion surface portion of the chain corresponds to lysine 303 to asparagine 374. N-linked (GlcNAc...) asparagine; by host glycosylation is present at asparagine 346. The helical transmembrane segment at leucine 375–isoleucine 395 threads the bilayer. Topologically, residues tryptophan 396–tryptophan 401 are intravirion. Residues glycine 402–valine 424 form a helical membrane-spanning segment. Residues tyrosine 425–isoleucine 426 are Virion surface-facing.

Belongs to the orthohepadnavirus major surface antigen family. As to quaternary structure, in its internal form (Li-HBsAg), interacts with the capsid protein and with the isoform S. Interacts with host chaperone CANX. In terms of assembly, associates with host chaperone CANX through its pre-S2 N glycan; this association may be essential for isoform M proper secretion. Interacts with isoform L. Interacts with the antigens of satellite virus HDV (HDVAgs); this interaction is required for encapsidation of HDV genomic RNA. In terms of processing, isoform M is N-terminally acetylated by host at a ratio of 90%, and N-glycosylated by host at the pre-S2 region. Myristoylated.

The protein localises to the virion membrane. Its function is as follows. The large envelope protein exists in two topological conformations, one which is termed 'external' or Le-HBsAg and the other 'internal' or Li-HBsAg. In its external conformation the protein attaches the virus to cell receptors and thereby initiating infection. This interaction determines the species specificity and liver tropism. This attachment induces virion internalization predominantly through caveolin-mediated endocytosis. The large envelope protein also assures fusion between virion membrane and endosomal membrane. In its internal conformation the protein plays a role in virion morphogenesis and mediates the contact with the nucleocapsid like a matrix protein. The middle envelope protein plays an important role in the budding of the virion. It is involved in the induction of budding in a nucleocapsid independent way. In this process the majority of envelope proteins bud to form subviral lipoprotein particles of 22 nm of diameter that do not contain a nucleocapsid. In Marmota monax (Woodchuck), this protein is Large envelope protein.